A 118-amino-acid chain; its full sequence is Large ribosomal subunit protein bL20 (118 aa).

Belongs to the bacterial ribosomal protein bL20 family.

In terms of biological role, binds directly to 23S ribosomal RNA and is necessary for the in vitro assembly process of the 50S ribosomal subunit. It is not involved in the protein synthesizing functions of that subunit. The sequence is that of Large ribosomal subunit protein bL20 from Klebsiella pneumoniae (strain 342).